Consider the following 241-residue polypeptide: Protein TraL (241 aa).

It to plasmid R751 TraL.

The chain is Protein TraL (traL) from Escherichia coli.